Consider the following 318-residue polypeptide: Ferrochelatase (318 aa).

Positions 186 and 264 each coordinate Fe cation.

It belongs to the ferrochelatase family.

It localises to the cytoplasm. The enzyme catalyses heme b + 2 H(+) = protoporphyrin IX + Fe(2+). The protein operates within porphyrin-containing compound metabolism; protoheme biosynthesis; protoheme from protoporphyrin-IX: step 1/1. In terms of biological role, catalyzes the ferrous insertion into protoporphyrin IX. This chain is Ferrochelatase, found in Chlamydia felis (strain Fe/C-56) (Chlamydophila felis).